A 238-amino-acid chain; its full sequence is Ribonuclease PH (238 aa).

Phosphate is bound by residues Arg86 and 124 to 126 (GTR).

It belongs to the RNase PH family. In terms of assembly, homohexameric ring arranged as a trimer of dimers.

It catalyses the reaction tRNA(n+1) + phosphate = tRNA(n) + a ribonucleoside 5'-diphosphate. In terms of biological role, phosphorolytic 3'-5' exoribonuclease that plays an important role in tRNA 3'-end maturation. Removes nucleotide residues following the 3'-CCA terminus of tRNAs; can also add nucleotides to the ends of RNA molecules by using nucleoside diphosphates as substrates, but this may not be physiologically important. Probably plays a role in initiation of 16S rRNA degradation (leading to ribosome degradation) during starvation. The chain is Ribonuclease PH from Pasteurella multocida (strain Pm70).